The chain runs to 200 residues: Golgi to ER traffic protein 1 (200 aa).

At 1–6 the chain is on the lumenal side; that stretch reads MEPYTL. The chain crosses the membrane as a helical span at residues 7–26; it reads LLFIFVIQIVKQIISAVGKQ. At 27–113 the chain is on the cytoplasmic side; that stretch reads SIESISWVLY…KVNTFTGYLI (87 aa). Residues 75–107 adopt a coiled-coil conformation; the sequence is AKWTKLNRQHDKLVAEIEQLQKEVDLDKVKVNT. A helical transmembrane segment spans residues 114-134; that stretch reads AILTSIPIWFFRVWYRSVVLF. Over 135-158 the chain is Lumenal; it reads YFPPGILPRALEWSIALPFTVTGG. The helical transmembrane segment at 159 to 175 threads the bilayer; sequence VSLTVWMMAAGAVASSL. At 176-200 the chain is on the cytoplasmic side; it reads TFLFMFPFEKAVPKPVLAKKSPQQL.

Belongs to the WRB/GET1 family. Component of the Golgi to ER traffic (GET) complex, which is composed of GET1, GET2 and GET3. Within the complex, GET1 and GET2 form a heterotetramer which is stabilized by phosphatidylinositol binding and which binds to the GET3 homodimer.

It is found in the endoplasmic reticulum membrane. Its subcellular location is the golgi apparatus membrane. Functionally, required for the post-translational delivery of tail-anchored (TA) proteins to the endoplasmic reticulum. Together with GET2, acts as a membrane receptor for soluble GET3, which recognizes and selectively binds the transmembrane domain of TA proteins in the cytosol. The GET complex cooperates with the HDEL receptor ERD2 to mediate the ATP-dependent retrieval of resident ER proteins that contain a C-terminal H-D-E-L retention signal from the Golgi to the ER. This Meyerozyma guilliermondii (strain ATCC 6260 / CBS 566 / DSM 6381 / JCM 1539 / NBRC 10279 / NRRL Y-324) (Yeast) protein is Golgi to ER traffic protein 1.